A 474-amino-acid chain; its full sequence is Trehalose-6-phosphate synthase (474 aa).

Arg10 lines the D-glucose 6-phosphate pocket. 22–23 (GG) is a UDP-alpha-D-glucose binding site. D-glucose 6-phosphate contacts are provided by Tyr77 and Asp131. Arg263 and Lys268 together coordinate UDP-alpha-D-glucose. Arg301 contributes to the D-glucose 6-phosphate binding site. UDP-alpha-D-glucose contacts are provided by residues Phe340 and 366–370 (LVAKE).

Belongs to the glycosyltransferase 20 family. In terms of assembly, homotetramer.

It catalyses the reaction D-glucose 6-phosphate + UDP-alpha-D-glucose = alpha,alpha-trehalose 6-phosphate + UDP + H(+). It participates in glycan biosynthesis; trehalose biosynthesis. Its function is as follows. Probably involved in the osmoprotection via the biosynthesis of trehalose. Catalyzes the transfer of glucose from UDP-alpha-D-glucose (UDP-Glc) to D-glucose 6-phosphate (Glc-6-P) to form trehalose-6-phosphate. Acts with retention of the anomeric configuration of the UDP-sugar donor. The chain is Trehalose-6-phosphate synthase from Pseudomonas savastanoi (Pseudomonas syringae pv. savastanoi).